The following is a 446-amino-acid chain: MIESCFNVGIWATGLALLMNQGQSPLLSNVGLSVLAYKATAMFIPRVGPSFIKRGFSGKDMNKVEKYVIPETMGAVSALVYFMCMIIFIPVLFYKYLVPNHNPNLPSDGSVAEVAKSQFPHDLLGAYLSALLSILSVSLLGILDDLFDIRWRHKFFLPAIAAIPLLVVYYVDYGVTYVSVPSIVRPFLKRSLINLGFLYYFYMAAVAIFCPNSINIIAGVNGVEAGQSLVLALVIACNDLFYVLSPKNKDALRAHLLSLYLVLPLIGVTAGLLKYNWWPSRVFVGDTFCYFAGMVMAVVGILGHFSKTLMLFFIPQIFNFALSVPQLFGLVECPRHRLPKLNVKTGLLENSYTEFSLNEHPLPKKTLLTISIFEKLRLIRVEYDPSTGRPLRCTNFTIINFVLYHLGPMREDHLTICIMGLQLLTGIFGLIIRHFVAPLVYPEDNI.

2 helical membrane passes run 1–21 and 25–45; these read MIES…LMNQ and PLLS…MFIP. Residues 59–61 and Glu71 each bind UDP-N-acetyl-alpha-D-glucosamine; that span reads KDM. The next 2 membrane-spanning stretches (helical) occupy residues 73–93 and 123–143; these read MGAV…PVLF and LLGA…LGIL. Lys154 contributes to the dolichyl phosphate binding site. 2 helical membrane passes run 155–175 and 191–211; these read FFLP…DYGV and SLIN…IFCP. 208–216 is a dolichyl phosphate binding site; that stretch reads IFCPNSINI. Asn215 is a binding site for Mg(2+). 4 helical membrane-spanning segments follow: residues 216–236, 254–274, 282–302, and 311–331; these read IIAG…LVIA, AHLL…GLLK, VFVG…VGIL, and LFFI…FGLV. UDP-N-acetyl-alpha-D-glucosamine is bound at residue Asn221. Asp286 lines the Mg(2+) pocket. 335–337 is a UDP-N-acetyl-alpha-D-glucosamine binding site; the sequence is RHR. Asn395 carries an N-linked (GlcNAc...) asparagine glycan. Residues 412–432 form a helical membrane-spanning segment; it reads DHLTICIMGLQLLTGIFGLII.

It belongs to the glycosyltransferase 4 family. Requires Mg(2+) as cofactor.

The protein localises to the endoplasmic reticulum membrane. It catalyses the reaction a di-trans,poly-cis-dolichyl phosphate + UDP-N-acetyl-alpha-D-glucosamine = an N-acetyl-alpha-D-glucosaminyl-diphospho-di-trans,poly-cis-dolichol + UMP. It functions in the pathway protein modification; protein glycosylation. Its activity is regulated as follows. Inhibited by natural nucleoside antibiotic tunicamycin, which acts as a structural analog and competitor of UDP-GlcNAc. Its function is as follows. UDP-N-acetylglucosamine--dolichyl-phosphate N-acetylglucosaminephosphotransferase that operates in the biosynthetic pathway of dolichol-linked oligosaccharides, the glycan precursors employed in protein asparagine (N)-glycosylation. The assembly of dolichol-linked oligosaccharides begins on the cytosolic side of the endoplasmic reticulum membrane and finishes in its lumen. The sequential addition of sugars to dolichol pyrophosphate produces dolichol-linked oligosaccharides containing fourteen sugars, including two GlcNAcs, nine mannoses and three glucoses. Once assembled, the oligosaccharide is transferred from the lipid to nascent proteins by oligosaccharyltransferases. Catalyzes the initial step of dolichol-linked oligosaccharide biosynthesis, transfering GlcNAc-1-P from cytosolic UDP-GlcNAc onto the carrier lipid dolichyl phosphate (P-dolichol), yielding GlcNAc-P-P-dolichol embedded in the cytoplasmic leaflet of the endoplasmic reticulum membrane. This chain is UDP-N-acetylglucosamine--dolichyl-phosphate N-acetylglucosaminephosphotransferase (gpt2), found in Schizosaccharomyces pombe (strain 972 / ATCC 24843) (Fission yeast).